Consider the following 287-residue polypeptide: Heavy metal-associated isoprenylated plant protein 4 (287 aa).

2 HMA domains span residues 14–80 (IITA…VELI) and 112–176 (IRTT…KHAE). A metal cation is bound by residues Cys-25, Cys-28, Cys-123, and Cys-126. Positions 179 to 235 (SSKTEEEKKKEEEDKKKKEEEDKKKKEDEKKKEEEKKKEEENKKKEGEKKKEEVKVE) form a coiled coil. The segment at 181–232 (KTEEEKKKEEEDKKKKEEEDKKKKEDEKKKEEEKKKEEENKKKEGEKKKEEV) is disordered. Cys-284 is modified (cysteine methyl ester). The S-farnesyl cysteine moiety is linked to residue Cys-284. A propeptide spans 285–287 (RIV) (removed in mature form).

This sequence belongs to the HIPP family.

Its function is as follows. Heavy-metal-binding protein. The sequence is that of Heavy metal-associated isoprenylated plant protein 4 from Arabidopsis thaliana (Mouse-ear cress).